A 281-amino-acid chain; its full sequence is Succinate dehydrogenase [ubiquinone] iron-sulfur subunit 1, mitochondrial (281 aa).

The transit peptide at 1–25 (MAAAALLRRSPAARALLSPALSSRL) directs the protein to the mitochondrion. The interval 26 to 48 (VASKPHSSSPAPPPPPSKAGANT) is disordered. Residues 49 to 141 (KTFSIYRWDP…ASTISPLPHM (93 aa)) form the 2Fe-2S ferredoxin-type domain. The [2Fe-2S] cluster site is built by C102, C107, and C122. The 4Fe-4S ferredoxin-type domain occupies 184–214 (DRAKLDGMYECILCACCSTSCPSYWWNPEEY). [4Fe-4S] cluster-binding residues include C194, C197, and C200. Residue C204 coordinates [3Fe-4S] cluster. Position 209 (W209) interacts with a ubiquinone. Residues C251 and C257 each contribute to the [3Fe-4S] cluster site. C261 is a binding site for [4Fe-4S] cluster.

This sequence belongs to the succinate dehydrogenase/fumarate reductase iron-sulfur protein family. In terms of assembly, component of complex II composed of eight subunits in plants: four classical SDH subunits SDH1, SDH2, SDH3 and SDH4 (a flavoprotein (FP), an iron-sulfur protein (IP), and a cytochrome b composed of a large and a small subunit.), as well as four subunits unknown in mitochondria from bacteria and heterotrophic eukaryotes. [2Fe-2S] cluster is required as a cofactor. [3Fe-4S] cluster serves as cofactor. Requires [4Fe-4S] cluster as cofactor.

The protein resides in the mitochondrion inner membrane. It catalyses the reaction a quinone + succinate = fumarate + a quinol. The protein operates within carbohydrate metabolism; tricarboxylic acid cycle; fumarate from succinate (eukaryal route): step 1/1. Iron-sulfur protein (IP) subunit of succinate dehydrogenase (SDH) that is involved in complex II of the mitochondrial electron transport chain and is responsible for transferring electrons from succinate to ubiquinone (coenzyme Q). The protein is Succinate dehydrogenase [ubiquinone] iron-sulfur subunit 1, mitochondrial of Oryza sativa subsp. japonica (Rice).